Reading from the N-terminus, the 235-residue chain is Large ribosomal subunit protein uL1 (235 aa).

Belongs to the universal ribosomal protein uL1 family. As to quaternary structure, part of the 50S ribosomal subunit.

Binds directly to 23S rRNA. The L1 stalk is quite mobile in the ribosome, and is involved in E site tRNA release. Functionally, protein L1 is also a translational repressor protein, it controls the translation of the L11 operon by binding to its mRNA. In Prochlorococcus marinus (strain MIT 9215), this protein is Large ribosomal subunit protein uL1.